A 278-amino-acid chain; its full sequence is Diaminopimelate epimerase (278 aa).

Positions 13, 46, and 65 each coordinate substrate. Residue C74 is the Proton donor of the active site. Residues 75-76 (GN), N157, N190, and 208-209 (ER) contribute to the substrate site. Residue C217 is the Proton acceptor of the active site. Position 218 to 219 (218 to 219 (GT)) interacts with substrate.

This sequence belongs to the diaminopimelate epimerase family. As to quaternary structure, homodimer.

It localises to the cytoplasm. It carries out the reaction (2S,6S)-2,6-diaminopimelate = meso-2,6-diaminopimelate. Its pathway is amino-acid biosynthesis; L-lysine biosynthesis via DAP pathway; DL-2,6-diaminopimelate from LL-2,6-diaminopimelate: step 1/1. Catalyzes the stereoinversion of LL-2,6-diaminopimelate (L,L-DAP) to meso-diaminopimelate (meso-DAP), a precursor of L-lysine and an essential component of the bacterial peptidoglycan. This is Diaminopimelate epimerase from Magnetococcus marinus (strain ATCC BAA-1437 / JCM 17883 / MC-1).